A 701-amino-acid polypeptide reads, in one-letter code: Polyribonucleotide nucleotidyltransferase (701 aa).

2 residues coordinate Mg(2+): Asp485 and Asp491. In terms of domain architecture, KH spans 552 to 611 (PKIFKTTVDPEKIRDIIGPGGKMINKIIAETNVKIDIEPDGRIFVAAPDDISGNRAISMI). One can recognise an S1 motif domain in the interval 621–689 (GQFFLGKVTR…KLGRLSLSRK (69 aa)).

This sequence belongs to the polyribonucleotide nucleotidyltransferase family. Mg(2+) serves as cofactor.

Its subcellular location is the cytoplasm. It carries out the reaction RNA(n+1) + phosphate = RNA(n) + a ribonucleoside 5'-diphosphate. In terms of biological role, involved in mRNA degradation. Catalyzes the phosphorolysis of single-stranded polyribonucleotides processively in the 3'- to 5'-direction. The protein is Polyribonucleotide nucleotidyltransferase of Caldicellulosiruptor bescii (strain ATCC BAA-1888 / DSM 6725 / KCTC 15123 / Z-1320) (Anaerocellum thermophilum).